Consider the following 501-residue polypeptide: Lysine--tRNA ligase (501 aa).

Glu411 and Glu418 together coordinate Mg(2+).

The protein belongs to the class-II aminoacyl-tRNA synthetase family. In terms of assembly, homodimer. It depends on Mg(2+) as a cofactor.

Its subcellular location is the cytoplasm. The enzyme catalyses tRNA(Lys) + L-lysine + ATP = L-lysyl-tRNA(Lys) + AMP + diphosphate. This Clostridium perfringens (strain 13 / Type A) protein is Lysine--tRNA ligase.